The sequence spans 319 residues: Acetyl-coenzyme A carboxylase carboxyl transferase subunit alpha (319 aa).

The CoA carboxyltransferase C-terminal domain occupies 35–296; the sequence is DLEKEIKQLE…KQRLLEQLKE (262 aa).

This sequence belongs to the AccA family. In terms of assembly, acetyl-CoA carboxylase is a heterohexamer composed of biotin carboxyl carrier protein (AccB), biotin carboxylase (AccC) and two subunits each of ACCase subunit alpha (AccA) and ACCase subunit beta (AccD).

It localises to the cytoplasm. The catalysed reaction is N(6)-carboxybiotinyl-L-lysyl-[protein] + acetyl-CoA = N(6)-biotinyl-L-lysyl-[protein] + malonyl-CoA. The protein operates within lipid metabolism; malonyl-CoA biosynthesis; malonyl-CoA from acetyl-CoA: step 1/1. Its function is as follows. Component of the acetyl coenzyme A carboxylase (ACC) complex. First, biotin carboxylase catalyzes the carboxylation of biotin on its carrier protein (BCCP) and then the CO(2) group is transferred by the carboxyltransferase to acetyl-CoA to form malonyl-CoA. This is Acetyl-coenzyme A carboxylase carboxyl transferase subunit alpha from Aliivibrio fischeri (strain MJ11) (Vibrio fischeri).